The primary structure comprises 704 residues: Elongation factor G (704 aa).

The 283-residue stretch at 8 to 290 (ARYRNIGISA…AVIDYLPSPV (283 aa)) folds into the tr-type G domain. Residues 17–24 (AHIDAGKT), 88–92 (DTPGH), and 142–145 (NKMD) each bind GTP.

Belongs to the TRAFAC class translation factor GTPase superfamily. Classic translation factor GTPase family. EF-G/EF-2 subfamily.

The protein localises to the cytoplasm. Functionally, catalyzes the GTP-dependent ribosomal translocation step during translation elongation. During this step, the ribosome changes from the pre-translocational (PRE) to the post-translocational (POST) state as the newly formed A-site-bound peptidyl-tRNA and P-site-bound deacylated tRNA move to the P and E sites, respectively. Catalyzes the coordinated movement of the two tRNA molecules, the mRNA and conformational changes in the ribosome. This Cronobacter sakazakii (strain ATCC BAA-894) (Enterobacter sakazakii) protein is Elongation factor G.